The primary structure comprises 184 residues: Ribosome-recycling factor (184 aa).

It belongs to the RRF family.

The protein localises to the cytoplasm. Responsible for the release of ribosomes from messenger RNA at the termination of protein biosynthesis. May increase the efficiency of translation by recycling ribosomes from one round of translation to another. In Acinetobacter baumannii (strain SDF), this protein is Ribosome-recycling factor.